Consider the following 301-residue polypeptide: MQKFDTKTFQGLILTLQDYWARQGCTIVQPLDMEVGAGTSHPMTCLRALGPEPIAAAYVQPSRRPTDGRYGENPNRLQHYYQFQVIIKPSPDNIQELYLGSLRELGLDPTIHDIRFVEDNWENPTLGAWGLGWEVWLNGMEVTQFTYFQQVGGLECKPVTGEITYGLERLAMYIQGVDSVYDLVWCDGPLGKTTYGDIYHQNEVEQSTYNFEYADVDFLFSCFEQYEKEARELLELEKPLPLPAYERILKAGHTFNLLDARKAISVTERQRYILRIRTLTKAVAEAYYASREALGFPMCKK.

This sequence belongs to the class-II aminoacyl-tRNA synthetase family. As to quaternary structure, tetramer of two alpha and two beta subunits.

The protein resides in the cytoplasm. The catalysed reaction is tRNA(Gly) + glycine + ATP = glycyl-tRNA(Gly) + AMP + diphosphate. This is Glycine--tRNA ligase alpha subunit from Proteus mirabilis (strain HI4320).